The sequence spans 396 residues: GDSL esterase/lipase ACHE (396 aa).

An N-terminal signal peptide occupies residues 1–31; it reads MATAATATAGSRAAVLLLLSLALALALRPSD. The Nucleophile role is filled by S49. N108, N126, N151, N196, and N339 each carry an N-linked (GlcNAc...) asparagine glycan. Residues D359 and H362 contribute to the active site.

Belongs to the 'GDSL' lipolytic enzyme family.

Its subcellular location is the secreted. Functionally, esterase that can hydrolyze acetylthiocholine and propionylthiocholine in vitro. Substrate preference is propionylthiocholine &gt; acetylthiocholine. Possesses extremely low activity against butyrylthiocholine. This chain is GDSL esterase/lipase ACHE, found in Zea mays (Maize).